The chain runs to 436 residues: Glutamyl-tRNA reductase (436 aa).

Substrate is bound by residues Thr-49 to Arg-52, Ser-109, Glu-114 to Gln-116, and Gln-120. Cys-50 serves as the catalytic Nucleophile. Gly-198–Ser-203 contributes to the NADP(+) binding site.

This sequence belongs to the glutamyl-tRNA reductase family. Homodimer.

The catalysed reaction is (S)-4-amino-5-oxopentanoate + tRNA(Glu) + NADP(+) = L-glutamyl-tRNA(Glu) + NADPH + H(+). The protein operates within porphyrin-containing compound metabolism; protoporphyrin-IX biosynthesis; 5-aminolevulinate from L-glutamyl-tRNA(Glu): step 1/2. Its pathway is porphyrin-containing compound metabolism; chlorophyll biosynthesis. Functionally, catalyzes the NADPH-dependent reduction of glutamyl-tRNA(Glu) to glutamate 1-semialdehyde (GSA). The protein is Glutamyl-tRNA reductase of Prochlorococcus marinus (strain MIT 9312).